We begin with the raw amino-acid sequence, 546 residues long: 2-isopropylmalate synthase (546 aa).

Positions Ile-5–Thr-274 constitute a Pyruvate carboxyltransferase domain. The Mn(2+) site is built by Asp-14, His-209, His-211, and Asn-245. A regulatory domain region spans residues Arg-415 to Glu-546.

Belongs to the alpha-IPM synthase/homocitrate synthase family. LeuA type 1 subfamily. As to quaternary structure, homodimer. The cofactor is Mn(2+).

The protein resides in the cytoplasm. The enzyme catalyses 3-methyl-2-oxobutanoate + acetyl-CoA + H2O = (2S)-2-isopropylmalate + CoA + H(+). The protein operates within amino-acid biosynthesis; L-leucine biosynthesis; L-leucine from 3-methyl-2-oxobutanoate: step 1/4. Its function is as follows. Catalyzes the condensation of the acetyl group of acetyl-CoA with 3-methyl-2-oxobutanoate (2-ketoisovalerate) to form 3-carboxy-3-hydroxy-4-methylpentanoate (2-isopropylmalate). This chain is 2-isopropylmalate synthase, found in Salinibacter ruber (strain M8).